Reading from the N-terminus, the 203-residue chain is Holliday junction branch migration complex subunit RuvA (203 aa).

The tract at residues 1–64 (MIGRLRGIII…EDAQLLYGFN (64 aa)) is domain I. Residues 65–142 (NKQERTLFKE…KGLHGDLFTP (78 aa)) are domain II. The interval 143-154 (AADLVLTSPASP) is flexible linker. The interval 155–203 (ATNDAEQEAVAALVALGYKPQEASRMVSKIARPDASSETLIREALRAAL) is domain III.

This sequence belongs to the RuvA family. In terms of assembly, homotetramer. Forms an RuvA(8)-RuvB(12)-Holliday junction (HJ) complex. HJ DNA is sandwiched between 2 RuvA tetramers; dsDNA enters through RuvA and exits via RuvB. An RuvB hexamer assembles on each DNA strand where it exits the tetramer. Each RuvB hexamer is contacted by two RuvA subunits (via domain III) on 2 adjacent RuvB subunits; this complex drives branch migration. In the full resolvosome a probable DNA-RuvA(4)-RuvB(12)-RuvC(2) complex forms which resolves the HJ.

The protein localises to the cytoplasm. Functionally, the RuvA-RuvB-RuvC complex processes Holliday junction (HJ) DNA during genetic recombination and DNA repair, while the RuvA-RuvB complex plays an important role in the rescue of blocked DNA replication forks via replication fork reversal (RFR). RuvA specifically binds to HJ cruciform DNA, conferring on it an open structure. The RuvB hexamer acts as an ATP-dependent pump, pulling dsDNA into and through the RuvAB complex. HJ branch migration allows RuvC to scan DNA until it finds its consensus sequence, where it cleaves and resolves the cruciform DNA. This chain is Holliday junction branch migration complex subunit RuvA, found in Escherichia coli O9:H4 (strain HS).